The following is a 379-amino-acid chain: 2-dehydropantoate 2-reductase (379 aa).

NADP(+) contacts are provided by residues 13 to 18 (GLGAMG) and Asn-119. Asn-119 provides a ligand contact to substrate. The active-site Proton donor is Lys-224. Substrate-binding residues include Asn-228, Asn-232, and Ser-316. Glu-328 is an NADP(+) binding site.

Belongs to the ketopantoate reductase family.

It catalyses the reaction (R)-pantoate + NADP(+) = 2-dehydropantoate + NADPH + H(+). It functions in the pathway cofactor biosynthesis; (R)-pantothenate biosynthesis; (R)-pantoate from 3-methyl-2-oxobutanoate: step 2/2. Functionally, catalyzes the NADPH-dependent reduction of ketopantoate into pantoic acid. In Saccharomyces cerevisiae (strain ATCC 204508 / S288c) (Baker's yeast), this protein is 2-dehydropantoate 2-reductase (PAN5).